We begin with the raw amino-acid sequence, 256 residues long: Putative cysteine-rich repeat secretory protein 21 (256 aa).

Residues 1–30 form the signal peptide; the sequence is MYSSVSKRLVSVHILVVVALQLLFIPNVLS. Gnk2-homologous domains are found at residues 37-139 and 145-253; these read YLHH…SIDT and YQNN…LYPF.

The protein belongs to the cysteine-rich repeat secretory protein family.

It localises to the secreted. The protein is Putative cysteine-rich repeat secretory protein 21 (CRRSP21) of Arabidopsis thaliana (Mouse-ear cress).